Reading from the N-terminus, the 326-residue chain is MEDKRKRRAATLSTALILFVACCVYTLYIFKFDNPRLSPPVSLLPTISTLKKIEHVTDLNKEYVFVGDVHGNYDEFIELIDDKIGGLGENITMILLGDFIHKGPDSDKVVSYILNHKDQVKCVLGNHEILVMMAYLNPDFSKWVRRPKLMTPLTFSTETNFIPQDISKISNAHGRLARELGFSKLSQLAEHCSMAIELDLDITGDILFGAHAGMVPGDFMKPNQIPGVSSLSNMKYVDKKNWSKTSREKENKNYVRWYTLWDKYGDHFSNAKVFYGHDASMGLNLRRQTKGLDTACIKNNLLSSMKVKYDIKKGQYDYELIQVQCS.

At 1 to 9 the chain is on the cytoplasmic side; the sequence is MEDKRKRRA. A helical membrane pass occupies residues 10–30; sequence ATLSTALILFVACCVYTLYIF. Residues 31-326 are Vacuolar-facing; that stretch reads KFDNPRLSPP…DYELIQVQCS (296 aa). N-linked (GlcNAc...) asparagine glycosylation is found at Asn90 and Asn241.

Belongs to the metallophosphoesterase superfamily. Interacts with PPN1. Requires Zn(2+) as cofactor. Co(2+) is required as a cofactor. Mg(2+) serves as cofactor.

It is found in the vacuole membrane. The enzyme catalyses [phosphate](n+1) + n H2O = (n+1) phosphate + n H(+). Not sensitive to heparin inhibition. In terms of biological role, catalyzes the hydrolysis of inorganic polyphosphate (polyP) chains of many hundreds of phosphate residues into shorter lengths. Exclusively shows endopolyphosphatase activity, cleaving inside the polyP chain. Together with PPN1, responsible for a substantial fraction of polyphosphatase activity that is necessary to mobilize polyP stores in response to phosphate scarcity. The sequence is that of Zinc-dependent endopolyphosphatase from Saccharomyces cerevisiae (strain ATCC 204508 / S288c) (Baker's yeast).